Reading from the N-terminus, the 143-residue chain is Subtelomeric hrmA-associated cluster protein cgnA (143 aa).

G-Q-I/R/S repeat units lie at residues 11-13 (GQI), 14-16 (GPI), 17-19 (GQR), 20-22 (GQS), 23-25 (GQR), 26-28 (GQS), 29-31 (GQR), 32-34 (GQS), 35-37 (GQI), 38-40 (GQS), 41-43 (GQS), 44-46 (GQS), 47-49 (GQI), 50-52 (GQI), 53-55 (GQI), 56-58 (GQI), 59-61 (GQI), 62-64 (GQI), 65-67 (GQI), 68-70 (GQI), 71-73 (GQI), 74-76 (GQI), 77-79 (GQI), 80-82 (GQI), 83-85 (GQI), 86-88 (GQI), 89-91 (GQI), 92-94 (GQI), and 95-97 (GQA). The Collagen-like domain maps to 11-68 (GQIGPIGQRGQSGQRGQSGQRGQSGQIGQSGQSGQSGQIGQIGQIGQIGQIGQIGQIG). A 29 X 3 AA approximate tandem repeats of G-Q-I/R/S region spans residues 11 to 97 (GQIGPIGQRG…IGQIGQIGQA (87 aa)). A disordered region spans residues 16–49 (IGQRGQSGQRGQSGQRGQSGQIGQSGQSGQSGQI).

Its subcellular location is the secreted. Its function is as follows. Collagen-like protein; part of the subtelomeric hrmA-associated cluster (HAC) containing genes that alter the hyphal surface (such as reduced total chitin or increased beta-glucan exposure) and perturb inter-hyphal interactions within the developing biofilms, resulting in a loss of vertically aligned polarized growing filaments. Consequently, this hypoxia-typic morphotype (called H-MORPH) with altered biofilm architecture leads to increased hypoxia fitness, increased host inflammation, rapid disease progression, and mortality in a murine model of invasive aspergillosis. CgnA is directly involved in the reduction of total surface chitin and the increase of beta-glucan exposure, and mediates the detachment of the extracellular matrix and especially of its component galactosaminogalactan (GAG). The polypeptide is Subtelomeric hrmA-associated cluster protein cgnA (Aspergillus fumigatus (strain ATCC MYA-4609 / CBS 101355 / FGSC A1100 / Af293) (Neosartorya fumigata)).